Here is a 114-residue protein sequence, read N- to C-terminus: Ribonuclease P protein component (114 aa).

It belongs to the RnpA family. As to quaternary structure, consists of a catalytic RNA component (M1 or rnpB) and a protein subunit.

The enzyme catalyses Endonucleolytic cleavage of RNA, removing 5'-extranucleotides from tRNA precursor.. RNaseP catalyzes the removal of the 5'-leader sequence from pre-tRNA to produce the mature 5'-terminus. It can also cleave other RNA substrates such as 4.5S RNA. The protein component plays an auxiliary but essential role in vivo by binding to the 5'-leader sequence and broadening the substrate specificity of the ribozyme. The chain is Ribonuclease P protein component from Alkaliphilus oremlandii (strain OhILAs) (Clostridium oremlandii (strain OhILAs)).